A 426-amino-acid chain; its full sequence is Histidine--tRNA ligase (426 aa).

It belongs to the class-II aminoacyl-tRNA synthetase family. In terms of assembly, homodimer.

The protein resides in the cytoplasm. It catalyses the reaction tRNA(His) + L-histidine + ATP = L-histidyl-tRNA(His) + AMP + diphosphate + H(+). This chain is Histidine--tRNA ligase, found in Shewanella baltica (strain OS195).